Consider the following 58-residue polypeptide: Large ribosomal subunit protein bL32c (58 aa).

Positions 1–19 (MAVPKKRKSKMKTRLRKAQ) are enriched in basic residues. The disordered stretch occupies residues 1–25 (MAVPKKRKSKMKTRLRKAQWKSEAS).

Belongs to the bacterial ribosomal protein bL32 family.

It localises to the plastid. The protein resides in the chloroplast. The protein is Large ribosomal subunit protein bL32c (rpl32) of Chlorella vulgaris (Green alga).